The following is a 379-amino-acid chain: L-lactate dehydrogenase (379 aa).

One can recognise an FMN hydroxy acid dehydrogenase domain in the interval 1–379 (MIISASTDYR…IGRDSLVSLP (379 aa)). Tyr-24 is a binding site for substrate. FMN is bound by residues Ser-106 and Gln-127. Tyr-129 is a substrate binding site. Position 155 (Thr-155) interacts with FMN. Residue Arg-164 coordinates substrate. Lys-251 contacts FMN. His-275 acts as the Proton acceptor in catalysis. Substrate is bound at residue Arg-278. 306 to 330 (DSGIRTGLDVVRMLALGADTVLLGR) lines the FMN pocket.

It belongs to the FMN-dependent alpha-hydroxy acid dehydrogenase family. Requires FMN as cofactor.

It is found in the cell inner membrane. It catalyses the reaction (S)-lactate + A = pyruvate + AH2. In terms of biological role, catalyzes the conversion of L-lactate to pyruvate. Is coupled to the respiratory chain. This chain is L-lactate dehydrogenase, found in Stenotrophomonas maltophilia (strain K279a).